The following is a 210-amino-acid chain: Na(+)-translocating NADH-quinone reductase subunit D (210 aa).

The next 6 helical transmembrane spans lie at proline 14–valine 34, leucine 42–leucine 62, isoleucine 72–alanine 92, valine 103–methionine 123, phenylalanine 131–isoleucine 151, and asparagine 178–isoleucine 198.

Belongs to the NqrDE/RnfAE family. In terms of assembly, composed of six subunits; NqrA, NqrB, NqrC, NqrD, NqrE and NqrF.

It localises to the cell inner membrane. It carries out the reaction a ubiquinone + n Na(+)(in) + NADH + H(+) = a ubiquinol + n Na(+)(out) + NAD(+). Functionally, NQR complex catalyzes the reduction of ubiquinone-1 to ubiquinol by two successive reactions, coupled with the transport of Na(+) ions from the cytoplasm to the periplasm. NqrA to NqrE are probably involved in the second step, the conversion of ubisemiquinone to ubiquinol. This chain is Na(+)-translocating NADH-quinone reductase subunit D, found in Shewanella halifaxensis (strain HAW-EB4).